The sequence spans 208 residues: Putative dioxygenase RBE_0329 (208 aa).

It belongs to the intradiol ring-cleavage dioxygenase family.

This chain is Putative dioxygenase RBE_0329, found in Rickettsia bellii (strain RML369-C).